The chain runs to 147 residues: Ubiquitin-conjugating enzyme E2 2 (147 aa).

Residues 1–147 (MALKRIQKEL…AREWTQKYAM (147 aa)) enclose the UBC core domain. The active-site Glycyl thioester intermediate is the C85.

The protein belongs to the ubiquitin-conjugating enzyme family. As to quaternary structure, interacts with the brc-1-brd-1 heterodimer following ionizing irradiation. In terms of tissue distribution, expressed in the nervous system.

Its subcellular location is the nucleus. It is found in the chromosome. The protein localises to the cytoplasm. The catalysed reaction is S-ubiquitinyl-[E1 ubiquitin-activating enzyme]-L-cysteine + [E2 ubiquitin-conjugating enzyme]-L-cysteine = [E1 ubiquitin-activating enzyme]-L-cysteine + S-ubiquitinyl-[E2 ubiquitin-conjugating enzyme]-L-cysteine.. The protein operates within protein modification; protein ubiquitination. Catalyzes the covalent attachment of ubiquitin to other proteins. Mediates the selective degradation of short-lived and abnormal proteins. Plays a role in the DNA damage response. In particular, in response to ionizing radiation, associates with the E3 ubiquitin-protein ligase brc-1-brd-1 heterodimer on chromatin to activate E3-ubiquitin ligase activity of the heterodimer, and thus its DNA damage repair mechanisms. Required, cell autonomously, for death of the linker cell, a male-specific cell which guides the elongation of the gonad; perhaps acting as part of the ubiquitin proteasome system (UPS) and modulated by heat shock transcription factor hsf-1. This is Ubiquitin-conjugating enzyme E2 2 from Caenorhabditis elegans.